A 382-amino-acid chain; its full sequence is S-adenosylmethionine synthase (382 aa).

Residue His16 participates in ATP binding. Asp18 is a binding site for Mg(2+). Glu44 is a K(+) binding site. Residues Glu57 and Gln100 each contribute to the L-methionine site. The interval 100 to 110 (QSADIAIGVDE) is flexible loop. ATP-binding positions include 165–167 (DAK), Asp240, 246–247 (RK), Ala263, and Lys267. Asp240 serves as a coordination point for L-methionine. Position 271 (Lys271) interacts with L-methionine.

This sequence belongs to the AdoMet synthase family. In terms of assembly, homotetramer; dimer of dimers. The cofactor is Mg(2+). It depends on K(+) as a cofactor.

The protein resides in the cytoplasm. The enzyme catalyses L-methionine + ATP + H2O = S-adenosyl-L-methionine + phosphate + diphosphate. The protein operates within amino-acid biosynthesis; S-adenosyl-L-methionine biosynthesis; S-adenosyl-L-methionine from L-methionine: step 1/1. Its function is as follows. Catalyzes the formation of S-adenosylmethionine (AdoMet) from methionine and ATP. The overall synthetic reaction is composed of two sequential steps, AdoMet formation and the subsequent tripolyphosphate hydrolysis which occurs prior to release of AdoMet from the enzyme. The protein is S-adenosylmethionine synthase of Alcanivorax borkumensis (strain ATCC 700651 / DSM 11573 / NCIMB 13689 / SK2).